The following is a 154-amino-acid chain: Ubiquitin-conjugating enzyme E2 L5 (154 aa).

Positions 2 to 149 (AASRRLMKEL…AEEFTKKYGE (148 aa)) constitute a UBC core domain. The Glycyl thioester intermediate role is filled by C86.

This sequence belongs to the ubiquitin-conjugating enzyme family.

The enzyme catalyses S-ubiquitinyl-[E1 ubiquitin-activating enzyme]-L-cysteine + [E2 ubiquitin-conjugating enzyme]-L-cysteine = [E1 ubiquitin-activating enzyme]-L-cysteine + S-ubiquitinyl-[E2 ubiquitin-conjugating enzyme]-L-cysteine.. The protein operates within protein modification; protein ubiquitination. Functionally, catalyzes the covalent attachment of ubiquitin to other proteins. The chain is Ubiquitin-conjugating enzyme E2 L5 from Homo sapiens (Human).